A 341-amino-acid polypeptide reads, in one-letter code: L-threonine 3-dehydrogenase (341 aa).

Residue Cys-38 participates in Zn(2+) binding. Active-site charge relay system residues include Thr-40 and His-43. Zn(2+)-binding residues include His-63, Glu-64, Cys-93, Cys-96, Cys-99, and Cys-107. Residues Ile-175, Asp-195, Arg-200, 262–264, and 286–287 each bind NAD(+); these read LGI and IY.

This sequence belongs to the zinc-containing alcohol dehydrogenase family. As to quaternary structure, homotetramer. Requires Zn(2+) as cofactor.

It is found in the cytoplasm. It carries out the reaction L-threonine + NAD(+) = (2S)-2-amino-3-oxobutanoate + NADH + H(+). The protein operates within amino-acid degradation; L-threonine degradation via oxydo-reductase pathway; glycine from L-threonine: step 1/2. Catalyzes the NAD(+)-dependent oxidation of L-threonine to 2-amino-3-ketobutyrate. The protein is L-threonine 3-dehydrogenase of Shewanella loihica (strain ATCC BAA-1088 / PV-4).